The primary structure comprises 347 residues: Phosphate acyltransferase (347 aa).

It belongs to the PlsX family. Homodimer. Probably interacts with PlsY.

The protein localises to the cytoplasm. It catalyses the reaction a fatty acyl-[ACP] + phosphate = an acyl phosphate + holo-[ACP]. The protein operates within lipid metabolism; phospholipid metabolism. In terms of biological role, catalyzes the reversible formation of acyl-phosphate (acyl-PO(4)) from acyl-[acyl-carrier-protein] (acyl-ACP). This enzyme utilizes acyl-ACP as fatty acyl donor, but not acyl-CoA. The sequence is that of Phosphate acyltransferase from Methylobacillus flagellatus (strain ATCC 51484 / DSM 6875 / VKM B-1610 / KT).